A 305-amino-acid chain; its full sequence is Tyrosine recombinase XerC (305 aa).

In terms of domain architecture, Core-binding (CB) spans 1 to 84 (MNEVFESYLT…TLRGFYKYAL (84 aa)). A Tyr recombinase domain is found at 105 to 299 (KLPVFMFPKQ…TAEQLQNLYK (195 aa)). Active-site residues include arginine 146, lysine 170, histidine 251, arginine 254, and histidine 277. The active-site O-(3'-phospho-DNA)-tyrosine intermediate is tyrosine 286.

It belongs to the 'phage' integrase family. XerC subfamily. As to quaternary structure, forms a cyclic heterotetrameric complex composed of two molecules of XerC and two molecules of XerD.

The protein localises to the cytoplasm. Its function is as follows. Site-specific tyrosine recombinase, which acts by catalyzing the cutting and rejoining of the recombining DNA molecules. The XerC-XerD complex is essential to convert dimers of the bacterial chromosome into monomers to permit their segregation at cell division. It also contributes to the segregational stability of plasmids. In Treponema denticola (strain ATCC 35405 / DSM 14222 / CIP 103919 / JCM 8153 / KCTC 15104), this protein is Tyrosine recombinase XerC.